Reading from the N-terminus, the 977-residue chain is Collagen alpha-2(I) chain (977 aa).

A disordered region spans residues 1 to 977; it reads SGGFDFSFLP…RGSQGSQGPS (977 aa). 4-hydroxyproline is present on residues P10, P13, P28, and P34. Residues 17-66 show a composition bias toward low complexity; sequence GPMGLMGPRGPPGASGAPGPQGFQGPAGEPGEPGQTGPAGARGPAGPPGK. Position 91 is a 5-hydroxylysine; alternate (K91). K91 carries O-linked (Gal...) hydroxylysine; alternate glycosylation. 2 stretches are compositionally biased toward low complexity: residues 138–159 and 205–226; these read SRGSDGSVGPVGPAGPIGSAGP and PGANGLTGAKGAAGLPGVAGAP. Residues 258-267 are compositionally biased toward gly residues; it reads GESGGKGEPG. Over residues 268 to 278 the composition is skewed to low complexity; sequence SAGPQGPPGSS. Residues 300–309 are compositionally biased toward gly residues; it reads GLRGGPGSRG. Residues 322–338 are compositionally biased toward low complexity; it reads PAGARGASGPAGVRGPS. 4-hydroxyproline occurs at positions 344 and 347. The span at 373-392 shows a compositional bias: low complexity; sequence LPGIDGRPGPIGPAGARGEA. Residues 441 to 450 are compositionally biased toward gly residues; the sequence is GVQGGKGEQG. Low complexity-rich tracts occupy residues 497–514 and 526–536; these read SGESGAVGPSGAIGSRGP and EPGVVGAPGTA. The span at 537–546 shows a compositional bias: gly residues; it reads GPAGSGGLPG. Composition is skewed to low complexity over residues 569-605 and 620-640; these read VGTTGRDGARGAPGAVGAPGPAGATGDRGEAGAAGPA and VGPAGPNGFAGPAGAAGQPGA. Basic and acidic residues predominate over residues 641–650; it reads KGERGTKGPK. The segment covering 658–668 has biased composition (low complexity); sequence PTGPVGSAGPA. Positions 678-687 are enriched in gly residues; it reads GSRGDGGPPG. Residues 689 to 698 are compositionally biased toward low complexity; that stretch reads TGFPGAAGRT. Over residues 735–744 the composition is skewed to gly residues; the sequence is GETGAGGPPG. Low complexity-rich tracts occupy residues 752-779 and 787-797; these read SGEPGTAGPPGTAGPQGLLGAPGILGLP and LPGVAGAVGEP. The span at 798 to 817 shows a compositional bias: gly residues; that stretch reads GPLGIGPPGARGPSGAGVNG. 2 stretches are compositionally biased toward low complexity: residues 853-871 and 878-898; these read PVGAAGAPGPHGAVGPAGK and PGPAGSVGPVGAVGPRGPSGP. The span at 902–913 shows a compositional bias: basic and acidic residues; it reads RGDKGEAGDKGP.

This sequence belongs to the fibrillar collagen family. In terms of assembly, trimers of one alpha 2(I) and two alpha 1(I) chains. Interacts (via C-terminus) with TMEM131 (via PapD-L domain); the interaction is direct and is involved in assembly and TRAPPIII ER-to-Golgi transport complex-dependent secretion of collagen. Post-translationally, prolines at the third position of the tripeptide repeating unit (G-X-Y) are hydroxylated in some or all of the chains. In terms of tissue distribution, expressed in bones.

Its subcellular location is the secreted. It localises to the extracellular space. It is found in the extracellular matrix. Functionally, type I collagen is a member of group I collagen (fibrillar forming collagen). In Scelidodon sp. (strain SLP-2019) (South American ground sloth), this protein is Collagen alpha-2(I) chain.